The primary structure comprises 238 residues: MKNKRSQNSPYITNSPYATLEKALGYSFKDKRLLEQALTHKSCKLALNNERLEFLGDAVLGLVIGELLYHKFYQYDEGKLSKLRASIVSAHGFTKLAKVIALQDYLHISSSEEISNGREKPSILSSAFEALMAGVYLEAGLAKVQKIIQNLLNRAYKRLDLEHLFMDYKTALQELTQAQFCVIPTYQLLKEKGPDHHKEFEMALYIQDKIYATAKGKSKKEAEQQCAYQALQKLKEVK.

Positions 17-140 (YATLEKALGY…LMAGVYLEAG (124 aa)) constitute an RNase III domain. Glutamate 53 serves as a coordination point for Mg(2+). Aspartate 57 is an active-site residue. Mg(2+)-binding residues include serine 126 and glutamate 129. Glutamate 129 is a catalytic residue. The region spanning 167 to 236 (DYKTALQELT…AYQALQKLKE (70 aa)) is the DRBM domain.

It belongs to the ribonuclease III family. Homodimer. Requires Mg(2+) as cofactor.

Its subcellular location is the cytoplasm. The enzyme catalyses Endonucleolytic cleavage to 5'-phosphomonoester.. Digests double-stranded RNA. Involved in the processing of primary rRNA transcript to yield the immediate precursors to the large and small rRNAs (23S and 16S). Processes some mRNAs, and tRNAs when they are encoded in the rRNA operon. Processes pre-crRNA and tracrRNA of type II CRISPR loci if present in the organism. This Helicobacter pylori (strain Shi470) protein is Ribonuclease 3.